Consider the following 256-residue polypeptide: uncharacterized protein (256 aa).

Residues 213–243 (TMSMEAKLEAAKKTLEKFKQEAASKRAKRTK) are a coiled coil. Residues 231–256 (KQEAASKRAKRTKPSGSKTTRSTGRK) are disordered. Residues 244–256 (PSGSKTTRSTGRK) are compositionally biased toward polar residues.

This is an uncharacterized protein from Acanthamoeba polyphaga (Amoeba).